Here is a 423-residue protein sequence, read N- to C-terminus: Serine hydroxymethyltransferase (423 aa).

(6S)-5,6,7,8-tetrahydrofolate contacts are provided by residues Leu125 and 129–131 (GHL). Lys234 is subject to N6-(pyridoxal phosphate)lysine. Glu249 is a (6S)-5,6,7,8-tetrahydrofolate binding site.

This sequence belongs to the SHMT family. Homodimer. Requires pyridoxal 5'-phosphate as cofactor.

The protein localises to the cytoplasm. It catalyses the reaction (6R)-5,10-methylene-5,6,7,8-tetrahydrofolate + glycine + H2O = (6S)-5,6,7,8-tetrahydrofolate + L-serine. The protein operates within one-carbon metabolism; tetrahydrofolate interconversion. It functions in the pathway amino-acid biosynthesis; glycine biosynthesis; glycine from L-serine: step 1/1. Functionally, catalyzes the reversible interconversion of serine and glycine with tetrahydrofolate (THF) serving as the one-carbon carrier. This reaction serves as the major source of one-carbon groups required for the biosynthesis of purines, thymidylate, methionine, and other important biomolecules. Also exhibits THF-independent aldolase activity toward beta-hydroxyamino acids, producing glycine and aldehydes, via a retro-aldol mechanism. The sequence is that of Serine hydroxymethyltransferase from Thermobifida fusca (strain YX).